The primary structure comprises 657 residues: Polycomb protein suz12-A (657 aa).

Positions 335–363 are disordered; that stretch reads TAPVAKPLATRNSESSTVDSSKTSNIKPP. The segment covering 347-358 has biased composition (low complexity); it reads SESSTVDSSKTS. The C2H2-type zinc finger occupies 413 to 436; the sequence is LHCPWCTLNCRKLYSLLKHLKLSH. The segment at 528 to 604 is VEFS-box; sequence RLYFHSDSCT…NQMNQACMSF (77 aa).

The protein belongs to the VEFS (VRN2-EMF2-FIS2-SU(Z)12) family. In terms of assembly, component of the prc2/eed-ezh2 complex.

The protein resides in the nucleus. Its function is as follows. Polycomb group (PcG) protein. Component of the prc2/eed-ezh2 complex, which methylates 'Lys-9' and 'Lys-27' of histone H3, leading to transcriptional repression of the affected target gene. The sequence is that of Polycomb protein suz12-A (suz12a) from Danio rerio (Zebrafish).